Here is a 254-residue protein sequence, read N- to C-terminus: Alcohol dehydrogenase (254 aa).

Residue 10–33 (FVAGLGGIGLDTSREIVKSGPKNL) coordinates NAD(+). S138 is a substrate binding site. Y151 functions as the Proton acceptor in the catalytic mechanism.

This sequence belongs to the short-chain dehydrogenases/reductases (SDR) family. As to quaternary structure, homodimer.

It catalyses the reaction a primary alcohol + NAD(+) = an aldehyde + NADH + H(+). It carries out the reaction a secondary alcohol + NAD(+) = a ketone + NADH + H(+). This is Alcohol dehydrogenase (Adh) from Drosophila hawaiiensis (Fruit fly).